A 360-amino-acid chain; its full sequence is Mitogen-activated protein kinase 1 (360 aa).

The residue at position 2 (alanine 2) is an N-acetylalanine. A Protein kinase domain is found at 25–313 (YTNLSYIGEG…VEQALAHPYL (289 aa)). Serine 29 carries the phosphoserine; by SGK1 modification. Residues 31-39 (IGEGAYGMV) and lysine 54 each bind ATP. The active-site Proton acceptor is aspartate 149. Phosphothreonine; by MAP2K1 and MAP2K2 is present on threonine 185. The TXY signature appears at 185–187 (TEY). A Phosphotyrosine; by MAP2K1 and MAP2K2 modification is found at tyrosine 187. Threonine 190 bears the Phosphothreonine; by autocatalysis mark. A phosphoserine mark is found at serine 246, serine 248, and serine 284.

The protein belongs to the protein kinase superfamily. CMGC Ser/Thr protein kinase family. MAP kinase subfamily. In terms of assembly, binds both upstream activators and downstream substrates in multimolecular complexes. Interacts with ADAM15, ARHGEF2, ARRB2, DAPK1 (via death domain), HSF4, IER3, IPO7, MKNK2, MORG1, NISCH, PEA15, SGK1, and isoform 1 of NEK2. Interacts (via phosphorylated form) with TPR (via C-terminal region and phosphorylated form); the interaction requires dimerization of MAPK1/ERK2 and increases following EGF stimulation. Interacts with MAP2K1. Interacts with DUSP6. Interacts (phosphorylated form) with CAV2 ('Tyr-19'-phosphorylated form); the interaction, promoted by insulin, leads to nuclear location and MAPK1 activation. MKNK2 isoform 1 binding prevents from dephosphorylation and inactivation. Interacts with DCC. The phosphorylated form interacts with PML. Interacts with STYX. Interacts with CDK2AP2. Interacts with CAVIN4. Interacts with DUSP7; the interaction enhances DUSP7 phosphatase activity. Interacts with GIT1; this interaction is necessary for MAPK1 localization to focal adhesions. Interacts with ZNF263. Interacts with phosphoglycerate kinase PGK1; the interaction is direct, occurs under hypoxic conditions, and promotes interaction between PGK1 and PIN1. Mg(2+) is required as a cofactor. Post-translationally, dually phosphorylated on Thr-185 and Tyr-187, which activates the enzyme. Phosphorylated upon FLT3 and KIT signaling. Phosphorylation on Ser-29 by SGK1 results in its activation by enhancing its interaction with MAP2K1/MEK1 and MAP2K2/MEK2. Phosphorylation at Ser-246 and Ser-248 as well as autophosphorylation at Thr-190 promote nuclear localization. Ligand-activated ALK induces tyrosine phosphorylation. Dephosphorylated by PTPRJ at Tyr-187. Dephosphorylated by DUSP1 and DUSP2 at Thr-185 and Tyr-187. In terms of processing, ISGylated. Ubiquitinated by TRIM15 via 'Lys-63'-linked ubiquitination; leading to activation. Deubiquitinated by CYLD.

Its subcellular location is the nucleus. The protein localises to the cytoplasm. It is found in the cytoskeleton. It localises to the microtubule organizing center. The protein resides in the centrosome. Its subcellular location is the spindle. The protein localises to the membrane. It is found in the caveola. It localises to the cell junction. The protein resides in the focal adhesion. It catalyses the reaction L-seryl-[protein] + ATP = O-phospho-L-seryl-[protein] + ADP + H(+). The catalysed reaction is L-threonyl-[protein] + ATP = O-phospho-L-threonyl-[protein] + ADP + H(+). Its activity is regulated as follows. Phosphorylated by MAP2K1/MEK1 and MAP2K2/MEK2 on Thr-185 and Tyr-187 in response to external stimuli like insulin or NGF. Both phosphorylations are required for activity. This phosphorylation causes dramatic conformational changes, which enable full activation and interaction of MAPK1/ERK2 with its substrates. Phosphorylation on Ser-29 by SGK1 results in its activation by enhancing its interaction with MAP2K1/MEK1 and MAP2K2/MEK2. Dephosphorylated and inactivated by DUSP1, DUSP3, DUSP6 and DUSP9. Inactivated by pyrimidylpyrrole inhibitors. Its function is as follows. Serine/threonine kinase which acts as an essential component of the MAP kinase signal transduction pathway. MAPK1/ERK2 and MAPK3/ERK1 are the 2 MAPKs which play an important role in the MAPK/ERK cascade. They participate also in a signaling cascade initiated by activated KIT and KITLG/SCF. Depending on the cellular context, the MAPK/ERK cascade mediates diverse biological functions such as cell growth, adhesion, survival and differentiation through the regulation of transcription, translation, cytoskeletal rearrangements. The MAPK/ERK cascade also plays a role in initiation and regulation of meiosis, mitosis, and postmitotic functions in differentiated cells by phosphorylating a number of transcription factors. About 160 substrates have already been discovered for ERKs. Many of these substrates are localized in the nucleus, and seem to participate in the regulation of transcription upon stimulation. However, other substrates are found in the cytosol as well as in other cellular organelles, and those are responsible for processes such as translation, mitosis and apoptosis. Moreover, the MAPK/ERK cascade is also involved in the regulation of the endosomal dynamics, including lysosome processing and endosome cycling through the perinuclear recycling compartment (PNRC); as well as in the fragmentation of the Golgi apparatus during mitosis. The substrates include transcription factors (such as ATF2, BCL6, ELK1, ERF, FOS, HSF4 or SPZ1), cytoskeletal elements (such as CANX, CTTN, GJA1, MAP2, MAPT, PXN, SORBS3 or STMN1), regulators of apoptosis (such as BAD, BTG2, CASP9, DAPK1, IER3, MCL1 or PPARG), regulators of translation (such as EIF4EBP1 and FXR1) and a variety of other signaling-related molecules (like ARHGEF2, DCC, FRS2 or GRB10). Protein kinases (such as RAF1, RPS6KA1/RSK1, RPS6KA3/RSK2, RPS6KA2/RSK3, RPS6KA6/RSK4, SYK, MKNK1/MNK1, MKNK2/MNK2, RPS6KA5/MSK1, RPS6KA4/MSK2, MAPKAPK3 or MAPKAPK5) and phosphatases (such as DUSP1, DUSP4, DUSP6 or DUSP16) are other substrates which enable the propagation the MAPK/ERK signal to additional cytosolic and nuclear targets, thereby extending the specificity of the cascade. Mediates phosphorylation of TPR in response to EGF stimulation. May play a role in the spindle assembly checkpoint. Phosphorylates PML and promotes its interaction with PIN1, leading to PML degradation. Phosphorylates CDK2AP2. Phosphorylates phosphoglycerate kinase PGK1 under hypoxic conditions to promote its targeting to the mitochondrion and suppress the formation of acetyl-coenzyme A from pyruvate. Acts as a transcriptional repressor. Binds to a [GC]AAA[GC] consensus sequence. Repress the expression of interferon gamma-induced genes. Seems to bind to the promoter of CCL5, DMP1, IFIH1, IFITM1, IRF7, IRF9, LAMP3, OAS1, OAS2, OAS3 and STAT1. Transcriptional activity is independent of kinase activity. This is Mitogen-activated protein kinase 1 from Bos taurus (Bovine).